The sequence spans 435 residues: MIVNVIGAGLAGSEVAYNLGKRGIRVRLFEMRPKKMTEVHKTGYFAELVCSNSLKSEDITNAEGLLKAEMKLMGSITLEAAEKARVPSGKALAVDRNIFAKEVTEAIESLESVEVIREEVTEFDPEEGLWVVATGPATSDGLFSFLRNLLGDDFLFFFDAVSPIVTFESIDMEHAFWGDRFGKGKDYINCPLTDGEYEELWKALVEAEVIEMEDFDRKLLFERCQPIEEIARSGKDALRYGPLRPTGLVDPRTGKEPYAVVQLRREDKEGRFYSLVGFQTRLKWNEQKRVLRKIPCLRNAEIVRYGVMHRNVYINSPKLLDIFFRLKKQPNIFFAGQITGVEGYMESAASGIYVAYNVYRILKGLSPLKLPEETMMGALFSYIIEKVEGDLKPMYANFGLLPPLKTRVKDKFGKRKKLAERAIEAMRKFLEEYPW.

An FAD-binding site is contributed by 7 to 12 (GAGLAG).

This sequence belongs to the MnmG family. TrmFO subfamily. FAD serves as cofactor.

It is found in the cytoplasm. It catalyses the reaction uridine(54) in tRNA + (6R)-5,10-methylene-5,6,7,8-tetrahydrofolate + NADH + H(+) = 5-methyluridine(54) in tRNA + (6S)-5,6,7,8-tetrahydrofolate + NAD(+). The enzyme catalyses uridine(54) in tRNA + (6R)-5,10-methylene-5,6,7,8-tetrahydrofolate + NADPH + H(+) = 5-methyluridine(54) in tRNA + (6S)-5,6,7,8-tetrahydrofolate + NADP(+). Its function is as follows. Catalyzes the folate-dependent formation of 5-methyl-uridine at position 54 (M-5-U54) in all tRNAs. This chain is Methylenetetrahydrofolate--tRNA-(uracil-5-)-methyltransferase TrmFO, found in Thermotoga petrophila (strain ATCC BAA-488 / DSM 13995 / JCM 10881 / RKU-1).